A 309-amino-acid polypeptide reads, in one-letter code: MSKIRGLPPEVREPGPGVELGVENGLLCQLIHSPEFNLFSNSVVFESNFIQTHVPEADFQVTKPGNWRDVCEGSATVILGVTSSVPSLPLPNVLLMANVTWPQGPFTTWSTPGDAPVINLSRLLPLKYVELRIYDRLQRILRVRTVTEKIYYLKLHEKHPEIVFQFWVRLVKILQKGLSITTKDPRIKFTHCLVPKMPTNSTETTPENSLLSSPQPSEPLVLLAAEQTSGSFSQLSGKPQLTADRNNDTAIEIDNCSSYKIPSPVASPINLNIPMRAALSHSLWEQEDWNEHLLQVHIASYLGEHFLGA.

A phosphoserine mark is found at serine 231, serine 263, and serine 267.

It belongs to the GARIN family. As to quaternary structure, interacts (via N-terminus) with RAB2B (in GTP-bound form).

Its subcellular location is the golgi apparatus. RAB2B effector protein required for accurate acrosome formation and normal male fertility. The polypeptide is Golgi-associated RAB2 interactor protein 1A (Homo sapiens (Human)).